The sequence spans 218 residues: LOB domain-containing protein 29 (218 aa).

The LOB domain maps to 10-112 (SPCGACKFLR…AELEILKQQA (103 aa)).

This sequence belongs to the LOB domain-containing protein family. As to expression, expressed in roots.

Its function is as follows. Involved in lateral root formation. Regulated by the transcriptional activators ARF7 and ARF19. The chain is LOB domain-containing protein 29 (LBD29) from Arabidopsis thaliana (Mouse-ear cress).